The primary structure comprises 232 residues: Enolase-phosphatase E1 (232 aa).

This sequence belongs to the HAD-like hydrolase superfamily. MasA/MtnC family. In terms of assembly, monomer. Mg(2+) serves as cofactor.

The catalysed reaction is 5-methylsulfanyl-2,3-dioxopentyl phosphate + H2O = 1,2-dihydroxy-5-(methylsulfanyl)pent-1-en-3-one + phosphate. The protein operates within amino-acid biosynthesis; L-methionine biosynthesis via salvage pathway; L-methionine from S-methyl-5-thio-alpha-D-ribose 1-phosphate: step 3/6. It participates in amino-acid biosynthesis; L-methionine biosynthesis via salvage pathway; L-methionine from S-methyl-5-thio-alpha-D-ribose 1-phosphate: step 4/6. Its function is as follows. Bifunctional enzyme that catalyzes the enolization of 2,3-diketo-5-methylthiopentyl-1-phosphate (DK-MTP-1-P) into the intermediate 2-hydroxy-3-keto-5-methylthiopentenyl-1-phosphate (HK-MTPenyl-1-P), which is then dephosphorylated to form the acireductone 1,2-dihydroxy-3-keto-5-methylthiopentene (DHK-MTPene). This chain is Enolase-phosphatase E1, found in Xanthomonas euvesicatoria pv. vesicatoria (strain 85-10) (Xanthomonas campestris pv. vesicatoria).